The chain runs to 66 residues: Large ribosomal subunit protein bL33c (66 aa).

It belongs to the bacterial ribosomal protein bL33 family.

The protein resides in the plastid. It localises to the chloroplast. This chain is Large ribosomal subunit protein bL33c, found in Glycine max (Soybean).